Reading from the N-terminus, the 506-residue chain is Galactose/methyl galactoside import ATP-binding protein MglA (506 aa).

2 consecutive ABC transporter domains span residues 14–249 (LEMS…VGRS) and 264–506 (VILE…SLHL). 46-53 (GENGAGKS) serves as a coordination point for ATP.

The protein belongs to the ABC transporter superfamily. Galactose/methyl galactoside importer (TC 3.A.1.2.3) family. The complex is composed of one ATP-binding protein (MglA), two transmembrane proteins (MglC) and a solute-binding protein (MglB).

It localises to the cell inner membrane. It catalyses the reaction D-galactose(out) + ATP + H2O = D-galactose(in) + ADP + phosphate + H(+). It carries out the reaction methyl beta-D-galactoside(out) + ATP + H2O = methyl beta-D-galactoside(in) + ADP + phosphate + H(+). In terms of biological role, part of the ABC transporter complex MglABC involved in galactose/methyl galactoside import. Responsible for energy coupling to the transport system. This is Galactose/methyl galactoside import ATP-binding protein MglA from Shigella boydii serotype 4 (strain Sb227).